A 629-amino-acid chain; its full sequence is Extracellular metalloproteinase 10 (629 aa).

The first 19 residues, 1 to 19, serve as a signal peptide directing secretion; that stretch reads MHGLLLAAGLLSLPLYTIA. A propeptide spanning residues 20-240 is cleaved from the precursor; that stretch reads HTQPSGALSR…VHNVVDYVAH (221 aa). 2 N-linked (GlcNAc...) asparagine glycosylation sites follow: N281 and N331. H424 serves as a coordination point for Zn(2+). Residue E425 is part of the active site. A Zn(2+)-binding site is contributed by H428. 2 N-linked (GlcNAc...) asparagine glycosylation sites follow: N469 and N617.

Belongs to the peptidase M36 family. Requires Zn(2+) as cofactor.

It localises to the secreted. In terms of biological role, secreted metalloproteinase that allows assimilation of proteinaceous substrates and probably acts as a virulence factor. This Coccidioides posadasii (strain C735) (Valley fever fungus) protein is Extracellular metalloproteinase 10 (MEP10).